A 119-amino-acid polypeptide reads, in one-letter code: Ribosome-binding factor A (119 aa).

It belongs to the RbfA family. In terms of assembly, monomer. Binds 30S ribosomal subunits, but not 50S ribosomal subunits or 70S ribosomes.

It localises to the cytoplasm. One of several proteins that assist in the late maturation steps of the functional core of the 30S ribosomal subunit. Associates with free 30S ribosomal subunits (but not with 30S subunits that are part of 70S ribosomes or polysomes). Required for efficient processing of 16S rRNA. May interact with the 5'-terminal helix region of 16S rRNA. The polypeptide is Ribosome-binding factor A (Ligilactobacillus salivarius (strain UCC118) (Lactobacillus salivarius)).